A 254-amino-acid chain; its full sequence is Hydroxypyruvate/pyruvate aldolase (254 aa).

His-47 serves as the catalytic Proton acceptor. Glu-151 and Asp-177 together coordinate a divalent metal cation.

It belongs to the HpcH/HpaI aldolase family. Requires a divalent metal cation as cofactor.

It carries out the reaction D-glyceraldehyde + pyruvate = 2-dehydro-3-deoxy-L-galactonate. Aldolase which can catalyze in vitro the aldolisation reaction between hydroxypyruvate (HPA) or pyruvate (PA) and D-glyceraldehyde (D-GA). The condensation of pyruvate and D-glyceraldehyde produces 2-dehydro-3-deoxy-L-galactonate as the major product. Has weak activity with hydroxypyruvate and D-glyceraldehyde. The polypeptide is Hydroxypyruvate/pyruvate aldolase (Chromohalobacter salexigens (strain ATCC BAA-138 / DSM 3043 / CIP 106854 / NCIMB 13768 / 1H11)).